A 215-amino-acid polypeptide reads, in one-letter code: Protein LURP-one-related 16 (215 aa).

The N-myristoyl glycine moiety is linked to residue glycine 2.

Belongs to the LOR family.

Might be related to the phospholipid scramblase and tubby-like superfamily of membrane tethered transcription factors. In Arabidopsis thaliana (Mouse-ear cress), this protein is Protein LURP-one-related 16.